The following is a 108-amino-acid chain: Cytochrome bo(3) ubiquinol oxidase subunit 4 (108 aa).

The Cytoplasmic portion of the chain corresponds to 1-16 (MNKYKKIKNNFDKEKK). The chain crosses the membrane as a helical span at residues 17 to 37 (SYIVGFLFSLFLTIIPFFCTL). At 38–46 (NHLFSRKIN) the chain is on the extracellular side. The chain crosses the membrane as a helical span at residues 47–67 (FFVILLCALSQIIIHFIYFLH). Residues 68–77 (LDFSKKNSWN) are Cytoplasmic-facing. The helical transmembrane segment at 78 to 98 (IISLLFILIIVFIIVFGSIWI) threads the bilayer. Residues 99 to 108 (MYNLNHHVIL) are Extracellular-facing.

Belongs to the cytochrome c oxidase bacterial subunit 4 family. Heterooctamer of two A chains, two B chains, two C chains and two D chains.

Its subcellular location is the cell membrane. Its function is as follows. Cytochrome bo(3) ubiquinol terminal oxidase is the component of the aerobic respiratory chain of E.coli that predominates when cells are grown at high aeration. Has proton pump activity across the membrane in addition to electron transfer, pumping 2 protons/electron. This is Cytochrome bo(3) ubiquinol oxidase subunit 4 (cyoD) from Buchnera aphidicola subsp. Schizaphis graminum (strain Sg).